Here is a 324-residue protein sequence, read N- to C-terminus: Holliday junction branch migration complex subunit RuvB (324 aa).

Residues 1-168 (MEDLALRPKT…FGIVEHLEYY (168 aa)) are large ATPase domain (RuvB-L). ATP contacts are provided by residues leucine 6, arginine 7, glycine 48, lysine 51, threonine 52, threonine 53, 115 to 117 (EDF), arginine 158, tyrosine 168, and arginine 205. Threonine 52 contacts Mg(2+). The tract at residues 169–239 (TPEELAQGVM…RALEALAALG (71 aa)) is small ATPAse domain (RuvB-S). The interval 242 to 324 (ELGLEKRDRE…PPPVGPLLEP (83 aa)) is head domain (RuvB-H). 2 residues coordinate DNA: arginine 297 and arginine 302.

It belongs to the RuvB family. Homohexamer. Forms an RuvA(8)-RuvB(12)-Holliday junction (HJ) complex. HJ DNA is sandwiched between 2 RuvA tetramers; dsDNA enters through RuvA and exits via RuvB. An RuvB hexamer assembles on each DNA strand where it exits the tetramer. Each RuvB hexamer is contacted by two RuvA subunits (via domain III) on 2 adjacent RuvB subunits; this complex drives branch migration. In the full resolvosome a probable DNA-RuvA(4)-RuvB(12)-RuvC(2) complex forms which resolves the HJ.

It is found in the cytoplasm. The catalysed reaction is ATP + H2O = ADP + phosphate + H(+). Its activity is regulated as follows. The ATPase activity of RuvB is enhanced by RuvA. Its function is as follows. The RuvA-RuvB-RuvC complex processes Holliday junction (HJ) DNA during genetic recombination and DNA repair, while the RuvA-RuvB complex plays an important role in the rescue of blocked DNA replication forks via replication fork reversal (RFR). RuvA specifically binds to HJ cruciform DNA, conferring on it an open structure. The RuvB hexamer acts as an ATP-dependent pump, pulling dsDNA into and through the RuvAB complex. RuvB forms 2 homohexamers on either side of HJ DNA bound by 1 or 2 RuvA tetramers; 4 subunits per hexamer contact DNA at a time. Coordinated motions by a converter formed by DNA-disengaged RuvB subunits stimulates ATP hydrolysis and nucleotide exchange. Immobilization of the converter enables RuvB to convert the ATP-contained energy into a lever motion, pulling 2 nucleotides of DNA out of the RuvA tetramer per ATP hydrolyzed, thus driving DNA branch migration. The RuvB motors rotate together with the DNA substrate, which together with the progressing nucleotide cycle form the mechanistic basis for DNA recombination by continuous HJ branch migration. Branch migration allows RuvC to scan DNA until it finds its consensus sequence, where it cleaves and resolves cruciform DNA. In terms of biological role, has Mg(2+)-, DNA-dependent ATPase activity; dsDNA and supercoiled DNA but not ssDNA stimulate activity. Binds to linear dsDNA in the absence of ATP or ATP-gamma-S. This subunit can promote Holliday junction migration alone in vitro. Partially complements an E.coli deletion for UV sensitivity. The protein is Holliday junction branch migration complex subunit RuvB of Thermus thermophilus.